The primary structure comprises 168 residues: Cytochrome c-type biogenesis protein CcmE (168 aa).

The Cytoplasmic segment spans residues 1–7 (MTRKKRR). Residues 8–28 (LYMLGLALLGLGTATALTLSA) form a helical; Signal-anchor for type II membrane protein membrane-spanning segment. Residues 29-168 (FEENIVFFYS…KVHATTTLKP (140 aa)) are Periplasmic-facing. 2 residues coordinate heme: His122 and Tyr126. A disordered region spans residues 149–168 (SIYTPADSDDKVHATTTLKP).

It belongs to the CcmE/CycJ family.

Its subcellular location is the cell inner membrane. Heme chaperone required for the biogenesis of c-type cytochromes. Transiently binds heme delivered by CcmC and transfers the heme to apo-cytochromes in a process facilitated by CcmF and CcmH. This is Cytochrome c-type biogenesis protein CcmE from Rhodospirillum centenum (strain ATCC 51521 / SW).